We begin with the raw amino-acid sequence, 802 residues long: Copper-exporting P-type ATPase (802 aa).

2 consecutive HMA domains span residues 5–70 and 72–138; these read KKTT…YGVA and ETVE…YDAS. Cu(+) is bound by residues Cys-16, Cys-19, Cys-83, and Cys-86. The next 6 helical transmembrane spans lie at 161 to 181, 192 to 212, 224 to 244, 256 to 276, 411 to 431, and 438 to 458; these read LIIS…HLFN, WFQF…FYVG, MDVL…YEMV, LYFE…YLEA, YFVP…ITLV, and PALV…LGLA. Asp-495 acts as the 4-aspartylphosphate intermediate in catalysis. Mg(2+) contacts are provided by Asp-690 and Asp-694. 2 helical membrane-spanning segments follow: residues 748–767 and 771–790; these read LFWA…LGLL and VAGA…ALRL.

It belongs to the cation transport ATPase (P-type) (TC 3.A.3) family. Type IB subfamily.

The protein localises to the cell membrane. The catalysed reaction is Cu(+)(in) + ATP + H2O = Cu(+)(out) + ADP + phosphate + H(+). In terms of biological role, involved in copper export. The chain is Copper-exporting P-type ATPase (copA) from Staphylococcus aureus (strain USA300 / TCH1516).